A 279-amino-acid chain; its full sequence is Undecaprenyl-diphosphatase (279 aa).

The next 8 membrane-spanning stretches (helical) occupy residues L2–L22, A44–I64, W85–L105, F113–I133, V163–L183, T188–L208, A223–I243, and F255–F275.

This sequence belongs to the UppP family.

The protein localises to the cell membrane. The catalysed reaction is di-trans,octa-cis-undecaprenyl diphosphate + H2O = di-trans,octa-cis-undecaprenyl phosphate + phosphate + H(+). Functionally, catalyzes the dephosphorylation of undecaprenyl diphosphate (UPP). Confers resistance to bacitracin. This Streptococcus pyogenes serotype M2 (strain MGAS10270) protein is Undecaprenyl-diphosphatase.